We begin with the raw amino-acid sequence, 101 residues long: Integration host factor subunit alpha (101 aa).

This sequence belongs to the bacterial histone-like protein family. Heterodimer of an alpha and a beta chain.

Its function is as follows. This protein is one of the two subunits of integration host factor, a specific DNA-binding protein that functions in genetic recombination as well as in transcriptional and translational control. The sequence is that of Integration host factor subunit alpha from Dinoroseobacter shibae (strain DSM 16493 / NCIMB 14021 / DFL 12).